We begin with the raw amino-acid sequence, 211 residues long: Large ribosomal subunit protein uL3 (211 aa).

An N5-methylglutamine modification is found at Gln151.

Belongs to the universal ribosomal protein uL3 family. In terms of assembly, part of the 50S ribosomal subunit. Forms a cluster with proteins L14 and L19. Methylated by PrmB.

Its function is as follows. One of the primary rRNA binding proteins, it binds directly near the 3'-end of the 23S rRNA, where it nucleates assembly of the 50S subunit. The protein is Large ribosomal subunit protein uL3 of Francisella tularensis subsp. tularensis (strain FSC 198).